The primary structure comprises 608 residues: Mitochondrial import receptor subunit TOM70 (608 aa).

Ala2 carries the N-acetylalanine modification. Residues 2–38 (AASKPVEAAVVAAAVPSSGSGVGGGGTAGPGTGGLPR) are Mitochondrial intermembrane-facing. A helical transmembrane segment spans residues 39–59 (WQLALAVGAPLLLGAGAIYLW). The Cytoplasmic segment spans residues 60–608 (SRQQRRREAR…KKYGLKPPTL (549 aa)). The segment at 67–107 (EARGRGDASGLKRNSERKTPEGRASPAPGSGHPEGPGAHLD) is disordered. Arg71 is subject to Omega-N-methylarginine. Ser91, Ser96, and Ser110 each carry phosphoserine. TPR repeat units follow at residues 114–147 (AQAA…CPTE) and 153–186 (STFY…NPKY). Lys185 is modified (N6-acetyllysine). Residue Lys275 forms a Glycyl lysine isopeptide (Lys-Gly) (interchain with G-Cter in SUMO2) linkage. 8 TPR repeats span residues 294–327 (ENSG…EGKY), 329–362 (AEAL…KEAN), 367–400 (ANAL…DPQN), 401–434 (ADVY…RPES), 440–475 (QKCF…FPRC), 476–509 (AEGY…EPDN), 511–544 (TTYV…DNKC), and 545–578 (DFAY…AKSE). Position 434 is a phosphoserine (Ser434).

This sequence belongs to the Tom70 family. As to quaternary structure, forms part of the preprotein translocase complex of the outer mitochondrial membrane (TOM complex) which consists of at least 7 different proteins (TOMM5, TOMM6, TOMM7, TOMM20, TOMM22, TOMM40 and TOMM70). Interacts with CAPN8. Interacts with TRADD, TRAF6 and STING. Interacts with MAVS; the interaction is enhanced by Sendai virus infection. Interacts with HSPA8 and HSP90AA1; both interactions are required for preprotein mitochondrial import. The interaction with HSP90AA1 is direct and mediates the association of TOMM70 with IRF3 and TBK1. Upon mitochondrial depolarization, interacts with PINK1; the interaction is required for PINK1-TOM-TIM23 supercomplex formation which is critical for PINK1 stabilization at the outer mitochondrial membrane, kinase activation and downstream mitophagy. In terms of assembly, (Microbial infection) Interacts (via C-terminus) with SARS coronaviru/SARS-CoV and SARS coronavirus-2/SARS-CoV-2 virus protein ORF9b. (Microbial infection) Interacts with parasite T.gondii RH strain MAF1b1; the interaction impairs TOMM70 import activity, enables the parasite to associate with the host mitochondria and facilitates the association of MAF1b1 with MIB complex component SAMM50, promoting the formation of SPOTs (structures positive for outer mitochondrial membrane (OMM)); the interaction is probably indirect.

It is found in the mitochondrion outer membrane. In terms of biological role, acts as a receptor of the preprotein translocase complex of the outer mitochondrial membrane (TOM complex). Recognizes and mediates the translocation of mitochondrial preproteins from the cytosol into the mitochondria in a chaperone dependent manner. Mediates TBK1 and IRF3 activation induced by MAVS in response to Sendai virus infection and promotes host antiviral responses during virus infection. Upon Sendai virus infection, recruits HSP90AA1:IRF3:BAX in mitochondrion and the complex induces apoptosis. The sequence is that of Mitochondrial import receptor subunit TOM70 from Homo sapiens (Human).